A 103-amino-acid chain; its full sequence is N(4)-acetylcytidine amidohydrolase (103 aa).

Residues 6-101 (ITFFQRFQDD…QTQFYVIEFK (96 aa)) enclose the ASCH domain. K21 (proton acceptor) is an active-site residue. The active-site Nucleophile is the T24. The active-site Proton donor is E74.

Belongs to the N(4)-acetylcytidine amidohydrolase family.

The enzyme catalyses N(4)-acetylcytidine + H2O = cytidine + acetate + H(+). It catalyses the reaction N(4)-acetyl-2'-deoxycytidine + H2O = 2'-deoxycytidine + acetate + H(+). It carries out the reaction N(4)-acetylcytosine + H2O = cytosine + acetate + H(+). Catalyzes the hydrolysis of N(4)-acetylcytidine (ac4C). This Escherichia coli O81 (strain ED1a) protein is N(4)-acetylcytidine amidohydrolase (yqfB).